Reading from the N-terminus, the 135-residue chain is Transcriptional regulator HosA (135 aa).

In terms of domain architecture, HTH marR-type spans 4–134 (RNKAFHQLRQ…FMQLVRKMMN (131 aa)). The segment at residues 48–71 (QVALIEAAVSTKATLAEMLARMEN) is a DNA-binding region (H-T-H motif).

Functionally, involved in the temperature-dependent positive control of flagellum-driven swimming motility and cellular aggregation. Regulates fliC expression by directly interacting with fliC promoter. The polypeptide is Transcriptional regulator HosA (hosA) (Escherichia coli O111:H-).